Here is a 190-residue protein sequence, read N- to C-terminus: Putative manganese efflux pump MntP (190 aa).

Helical transmembrane passes span 5–25 (ALLA…VATG), 41–61 (WHFG…GQGI), 64–84 (FVDA…GLKM), 105–125 (TSLI…GVTL), 127–147 (MLGL…LGLT), and 169–189 (ILGG…SGVF).

It belongs to the MntP (TC 9.B.29) family.

It is found in the cell inner membrane. In terms of biological role, probably functions as a manganese efflux pump. This is Putative manganese efflux pump MntP from Oleidesulfovibrio alaskensis (strain ATCC BAA-1058 / DSM 17464 / G20) (Desulfovibrio alaskensis).